A 221-amino-acid polypeptide reads, in one-letter code: ATP phosphoribosyltransferase (221 aa).

This sequence belongs to the ATP phosphoribosyltransferase family. Short subfamily. As to quaternary structure, heteromultimer composed of HisG and HisZ subunits.

The protein localises to the cytoplasm. It catalyses the reaction 1-(5-phospho-beta-D-ribosyl)-ATP + diphosphate = 5-phospho-alpha-D-ribose 1-diphosphate + ATP. It functions in the pathway amino-acid biosynthesis; L-histidine biosynthesis; L-histidine from 5-phospho-alpha-D-ribose 1-diphosphate: step 1/9. Functionally, catalyzes the condensation of ATP and 5-phosphoribose 1-diphosphate to form N'-(5'-phosphoribosyl)-ATP (PR-ATP). Has a crucial role in the pathway because the rate of histidine biosynthesis seems to be controlled primarily by regulation of HisG enzymatic activity. The sequence is that of ATP phosphoribosyltransferase from Rhizorhabdus wittichii (strain DSM 6014 / CCUG 31198 / JCM 15750 / NBRC 105917 / EY 4224 / RW1) (Sphingomonas wittichii).